Consider the following 675-residue polypeptide: Secretogranin-1 (675 aa).

The N-terminal stretch at 1–20 (MQRAMLLGLLGAAALAAVIS) is a signal peptide. Cys-36 and Cys-57 are disulfide-bonded. Residues 64–90 (SGKEVKGEEKGENENSKFEVRLLRDPS) are compositionally biased toward basic and acidic residues. Disordered regions lie at residues 64–507 (SGKE…YPTT) and 528–555 (NSDF…VTMT). A phosphoserine mark is found at Ser-93, Ser-99, Ser-100, Ser-129, and Ser-147. Residue Ser-93 is glycosylated (O-linked (Xyl...) (chondroitin sulfate) serine). Composition is skewed to basic and acidic residues over residues 148–161 (KEAK…RGGK) and 168–248 (GKIY…KPQE). Phosphoserine is present on Ser-190. The O-linked (Xyl...) (chondroitin sulfate) serine glycan is linked to Ser-236. Positions 250-269 (PDQDQSEEESEEGEEGEEGA) are enriched in acidic residues. Residues Ser-255, Ser-259, Ser-291, Ser-309, and Ser-333 each carry the phosphoserine modification. The segment covering 292–311 (YEGRRPLSEERKHAAGESKD) has biased composition (basic and acidic residues). Tyr-339 is subject to Sulfotyrosine. Composition is skewed to basic and acidic residues over residues 361–410 (GSEE…EGAK) and 429–452 (SRQE…DTAK). 4 positions are modified to phosphoserine: Ser-362, Ser-372, Ser-375, and Ser-397. Tyr-469 is subject to Sulfotyrosine. Ser-490, Ser-529, and Ser-540 each carry phosphoserine. Tyr-563 is modified (sulfotyrosine). Residues 620–646 (DFYDSEEQMGPHQEAEDEKDRADQRVL) form a disordered region. Tyr-622 carries the post-translational modification Sulfotyrosine; partial. Phosphoserine is present on Ser-624. Residues 637-646 (EKDRADQRVL) are compositionally biased toward basic and acidic residues. At Arg-674 the chain carries Arginine amide; in CCB peptide short form.

It belongs to the chromogranin/secretogranin protein family. Interacts with ITPR1 in the secretory granules. Post-translationally, extensively processed in glucagonoma tissue by limited proteolysis at conserved basic residues. Alternative processing are seen in different tissues. The proglucagon-converting enzymes present in transformed alpha-cells are likely candidates to be involved in tissue-specific processing. In terms of tissue distribution, expressed in the brain, adrenal medulla and anterior pituitary. In the brain, localized to the hippocampal formation, the endocrine hypothalamus, the olfactory system, and in anatomically distinct structures in the pons-medulla.

It localises to the secreted. Its function is as follows. Secretogranin-1 is a neuroendocrine secretory granule protein, which may be the precursor for other biologically active peptides. This is Secretogranin-1 (Chgb) from Rattus norvegicus (Rat).